Reading from the N-terminus, the 150-residue chain is D-aminoacyl-tRNA deacylase (150 aa).

The Gly-cisPro motif, important for rejection of L-amino acids motif lies at 136–137; that stretch reads GP.

This sequence belongs to the DTD family. In terms of assembly, homodimer.

Its subcellular location is the cytoplasm. The catalysed reaction is glycyl-tRNA(Ala) + H2O = tRNA(Ala) + glycine + H(+). It catalyses the reaction a D-aminoacyl-tRNA + H2O = a tRNA + a D-alpha-amino acid + H(+). Functionally, an aminoacyl-tRNA editing enzyme that deacylates mischarged D-aminoacyl-tRNAs. Also deacylates mischarged glycyl-tRNA(Ala), protecting cells against glycine mischarging by AlaRS. Acts via tRNA-based rather than protein-based catalysis; rejects L-amino acids rather than detecting D-amino acids in the active site. By recycling D-aminoacyl-tRNA to D-amino acids and free tRNA molecules, this enzyme counteracts the toxicity associated with the formation of D-aminoacyl-tRNA entities in vivo and helps enforce protein L-homochirality. This Staphylococcus haemolyticus (strain JCSC1435) protein is D-aminoacyl-tRNA deacylase.